We begin with the raw amino-acid sequence, 265 residues long: Probable autolysin SsaALP (265 aa).

The first 25 residues, 1–25 (MKKLAFAITATSGAAAFLTHHDAQA), serve as a signal peptide directing secretion. 2 consecutive LysM domains span residues 27–70 (TQHT…VISV) and 89–132 (SSHT…TLQI). Positions 72–92 (GSDAQNTSNTSPQAGSASSHT) are disordered. A compositionally biased stretch (polar residues) spans 74–92 (DAQNTSNTSPQAGSASSHT). One can recognise a Peptidase C51 domain in the interval 141–265 (TPTATTGSNG…SEVSSYAFIH (125 aa)).

The enzyme catalyses Hydrolyzes the link between N-acetylmuramoyl residues and L-amino acid residues in certain cell-wall glycopeptides.. Its function is as follows. Has weak lytic activity toward S.aureus cells. This is Probable autolysin SsaALP from Staphylococcus aureus (strain NCTC 8325 / PS 47).